The following is an 801-amino-acid chain: Phenylalanine--tRNA ligase beta subunit (801 aa).

A tRNA-binding domain is found at 39–153; that stretch reads ADGLSKLVVG…EEAVPGDAIF (115 aa). The region spanning 406–481 is the B5 domain; that stretch reads TEPVEVSTSL…RIYGYDKLPT (76 aa). 4 residues coordinate Mg(2+): Asp-459, Asp-465, Glu-468, and Glu-469. One can recognise an FDX-ACB domain in the interval 708–801; it reads TKFPAMTRDV…LTEQVGAEVR (94 aa).

Belongs to the phenylalanyl-tRNA synthetase beta subunit family. Type 1 subfamily. Tetramer of two alpha and two beta subunits. Mg(2+) serves as cofactor.

The protein localises to the cytoplasm. The catalysed reaction is tRNA(Phe) + L-phenylalanine + ATP = L-phenylalanyl-tRNA(Phe) + AMP + diphosphate + H(+). This chain is Phenylalanine--tRNA ligase beta subunit, found in Streptococcus pyogenes serotype M1.